The sequence spans 640 residues: Protein argonaute (640 aa).

The segment at 1–100 (MYLNLYEIKI…YIKKKFIDNN (100 aa)) is N-terminal domain. Residues 101-153 (FYYKRGNNYISINDKFPLDSNTNVNAHLTYKIKLYKINERYYISVLPKFTFLS) are linker L1. A PAZ domain region spans residues 154-209 (DKPALESPIKSTYLFNIKSGKTFPYISGLNGVLKIDLGENGIKEVLFPENYYFNFT). The interval 210 to 291 (SKEAEKFGFS…KYSFYKNDQK (82 aa)) is linker L2. The interval 292–423 (IKIAFFFSSK…YVYKMGNFIP (132 aa)) is mid domain. The interval 424 to 640 (ECQPYVIRNL…EWKLYIPYMK (217 aa)) is PIWI domain. Catalysis depends on residues Asp-445, Glu-481, Asp-515, and Asn-623. Mn(2+) is bound at residue Asp-445. Mn(2+)-binding residues include Asp-515 and Asn-623.

This sequence belongs to the argonaute family. Long pAgo subfamily. It depends on Mn(2+) as a cofactor.

Its function is as follows. A highly versatile argonaute that uses 5'-phospho- and 5'-OH- guide RNA (gRNA) or DNA (gDNA) to cleave target RNA or ssDNA (tDNA) in all possible combinations; has no detectable activity in the absence of guide. Uses short guide sequences (18-21 nucleotides (nt) on average) to bind complementary target nucleic acids resulting in target cleavage in a site-specific manner. Using 5'-phospho-gRNA or 5'-OH-gRNA the cleavage site is 10 nt downstream of the target residue base-paired with the 5'-end of the gRNA, using 5'-phospho-gDNA the cleavage site is 11 nucleotides (nt) downstream, while with 5'-OH-gDNA the cleavage site is 9 nt downstream. The sequence is that of Protein argonaute from Marinitoga hydrogenitolerans (strain DSM 16785 / JCM 12826 / AT1271).